The primary structure comprises 319 residues: Large ribosomal subunit protein uL10 (319 aa).

The tract at residues A286 to D319 is disordered. A compositionally biased stretch (acidic residues) spans P304–D319.

Belongs to the universal ribosomal protein uL10 family. As to quaternary structure, P0 forms a pentameric complex by interaction with dimers of P1 and P2. In terms of processing, phosphorylated.

Ribosomal protein P0 is the functional equivalent of E.coli protein L10. This Zea mays (Maize) protein is Large ribosomal subunit protein uL10 (RP-P0).